The chain runs to 422 residues: Metallocarboxypeptidase A (422 aa).

A signal peptide spans 1–17 (MRSVLSLALLAANVVTA). Residues 18 to 112 (AVVSPFDYSG…FEAYSAGYAP (95 aa)) constitute a propeptide, activation peptide. In terms of domain architecture, Peptidase M14 spans 119–419 (SYHSYQDHIS…AGTVAMLKAV (301 aa)). Zn(2+) contacts are provided by His-179 and Glu-182. Residues 179-182 (HARE), Arg-237, and 254-255 (NR) contribute to the substrate site. Cys-248 and Cys-271 form a disulfide bridge. His-309 serves as a coordination point for Zn(2+). 310–311 (SY) serves as a coordination point for substrate. Residue Glu-385 is the Proton donor/acceptor of the active site.

Belongs to the peptidase M14 family. Zn(2+) is required as a cofactor.

It is found in the secreted. Functionally, extracellular metalloprotease that contributes to pathogenicity. This Trichophyton tonsurans (Scalp ringworm fungus) protein is Metallocarboxypeptidase A (MCPA).